The primary structure comprises 205 residues: Urease accessory protein UreE (205 aa).

The tract at residues alanine 171–serine 205 is disordered. Positions histidine 177–glycine 196 are enriched in basic residues.

This sequence belongs to the UreE family.

The protein localises to the cytoplasm. Involved in urease metallocenter assembly. Binds nickel. Probably functions as a nickel donor during metallocenter assembly. This chain is Urease accessory protein UreE, found in Bordetella bronchiseptica (strain ATCC BAA-588 / NCTC 13252 / RB50) (Alcaligenes bronchisepticus).